Consider the following 170-residue polypeptide: Putative beta-eliminating lyase-like protein (170 aa).

N6-(pyridoxal phosphate)lysine is present on Lys32.

Belongs to the beta-eliminating lyase family. Pyridoxal 5'-phosphate is required as a cofactor.

The polypeptide is Putative beta-eliminating lyase-like protein (Dictyostelium discoideum (Social amoeba)).